The primary structure comprises 291 residues: S-methyl-5'-thioadenosine phosphorylase (291 aa).

Residues Ser-12, 54-55 (RH), and 87-88 (SA) contribute to the phosphate site. Met-185 is a binding site for substrate. Residue Thr-186 coordinates phosphate. Substrate is bound at residue 209–211 (DFD).

The protein belongs to the PNP/MTAP phosphorylase family. MTAP subfamily. Homohexamer. Dimer of a homotrimer.

It catalyses the reaction S-methyl-5'-thioadenosine + phosphate = 5-(methylsulfanyl)-alpha-D-ribose 1-phosphate + adenine. It participates in amino-acid biosynthesis; L-methionine biosynthesis via salvage pathway; S-methyl-5-thio-alpha-D-ribose 1-phosphate from S-methyl-5'-thioadenosine (phosphorylase route): step 1/1. In terms of biological role, catalyzes the reversible phosphorylation of S-methyl-5'-thioadenosine (MTA) to adenine and 5-methylthioribose-1-phosphate. Involved in the breakdown of MTA, a major by-product of polyamine biosynthesis. Responsible for the first step in the methionine salvage pathway after MTA has been generated from S-adenosylmethionine. Has broad substrate specificity with 6-aminopurine nucleosides as preferred substrates. The protein is S-methyl-5'-thioadenosine phosphorylase of Bradyrhizobium diazoefficiens (strain JCM 10833 / BCRC 13528 / IAM 13628 / NBRC 14792 / USDA 110).